We begin with the raw amino-acid sequence, 27 residues long: Nucleoside diphosphate kinase 2 (27 aa).

Residue Lys-3 coordinates ATP.

It belongs to the NDK family. The cofactor is Mg(2+).

It carries out the reaction a 2'-deoxyribonucleoside 5'-diphosphate + ATP = a 2'-deoxyribonucleoside 5'-triphosphate + ADP. The catalysed reaction is a ribonucleoside 5'-diphosphate + ATP = a ribonucleoside 5'-triphosphate + ADP. Its function is as follows. Major role in the synthesis of nucleoside triphosphates other than ATP. The ATP gamma phosphate is transferred to the NDP beta phosphate via a ping-pong mechanism, using a phosphorylated active-site intermediate. The polypeptide is Nucleoside diphosphate kinase 2 (Pseudotsuga menziesii (Douglas-fir)).